Reading from the N-terminus, the 311-residue chain is Mediator of RNA polymerase II transcription subunit 27 (311 aa).

The residue at position 132 (S132) is a Phosphoserine. K134 is subject to N6-methyllysine.

It belongs to the Mediator complex subunit 27 family. In terms of assembly, component of the Mediator complex, which is composed of MED1, MED4, MED6, MED7, MED8, MED9, MED10, MED11, MED12, MED13, MED13L, MED14, MED15, MED16, MED17, MED18, MED19, MED20, MED21, MED22, MED23, MED24, MED25, MED26, MED27, MED29, MED30, MED31, CCNC, CDK8 and CDC2L6/CDK11. The MED12, MED13, CCNC and CDK8 subunits form a distinct module termed the CDK8 module. Mediator containing the CDK8 module is less active than Mediator lacking this module in supporting transcriptional activation. Individual preparations of the Mediator complex lacking one or more distinct subunits have been variously termed ARC, CRSP, DRIP, PC2, SMCC and TRAP.

It is found in the nucleus. Functionally, component of the Mediator complex, a coactivator involved in the regulated transcription of nearly all RNA polymerase II-dependent genes. Mediator functions as a bridge to convey information from gene-specific regulatory proteins to the basal RNA polymerase II transcription machinery. Mediator is recruited to promoters by direct interactions with regulatory proteins and serves as a scaffold for the assembly of a functional preinitiation complex with RNA polymerase II and the general transcription factors. The protein is Mediator of RNA polymerase II transcription subunit 27 (MED27) of Bos taurus (Bovine).